A 420-amino-acid polypeptide reads, in one-letter code: uncharacterized protein (420 aa).

This sequence belongs to the Rv1128c/1148c/1588c/1702c/1945/3466 family.

This is an uncharacterized protein from Mycobacterium tuberculosis (strain CDC 1551 / Oshkosh).